Here is a 1499-residue protein sequence, read N- to C-terminus: Collagen alpha-2(V) chain (1499 aa).

An N-terminal signal peptide occupies residues 1-26; sequence MMANWAEARPLLILIVLLGQFVSIKA. One can recognise a VWFC domain in the interval 39 to 97; the sequence is IACTQNGQMYLNRDIWKPAPCQICVCDNGAILCDKIECQDVLDCADPVTPPGECCPVCS. Positions 104–1268 are disordered; sequence NTNFGRGRKG…DDKNKTDPGV (1165 aa). The span at 170 to 182 shows a compositional bias: pro residues; it reads PGAPGPPGHPSHP. Positions 212–227 are enriched in low complexity; it reads PGSVGPVGPRGPQGLQ. The span at 236 to 248 shows a compositional bias: pro residues; that stretch reads TGPPGEPGDPGPM. 3 positions are modified to hydroxyproline: P290, P293, and P296. Low complexity-rich tracts occupy residues 322–340 and 427–443; these read EAGP…PRGM and TPGA…SGPP. The Cell attachment site motif lies at 506 to 508; the sequence is RGD. Composition is skewed to low complexity over residues 604-626 and 694-709; these read SIGI…SGDP and DQGV…PLGP. 2 positions are modified to hydroxyproline: P611 and P617. The span at 710–721 shows a compositional bias: basic and acidic residues; the sequence is RGERGNPGERGE. Over residues 732–741 the composition is skewed to gly residues; that stretch reads GMAGGHGPDG. Residues 742–758 are compositionally biased toward low complexity; sequence PKGSPGPSGTPGDTGPP. Residues 776–787 are compositionally biased toward basic and acidic residues; the sequence is KGDRGGIGEKGA. Residues 826–841 are compositionally biased toward low complexity; sequence PPGSRGNPGSRGENGP. Residues 894–903 are compositionally biased toward gly residues; sequence GLKGGRGTQG. P919 bears the 3-hydroxyproline; partial mark. Residues 919–929 are compositionally biased toward pro residues; it reads PPGPAGAPGPA. Short sequence motifs (cell attachment site) lie at residues 944 to 946, 1067 to 1069, 1070 to 1072, 1100 to 1102, 1127 to 1129, and 1136 to 1138; these read RGD. Over residues 1063 to 1072 the composition is skewed to basic and acidic residues; the sequence is AVGERGDRGD. A compositionally biased stretch (low complexity) spans 1093–1114; sequence APGDAGQRGDPGSRGPIGPPGR. Residues 1127-1141 are compositionally biased toward basic and acidic residues; sequence RGDKGDHGDRGDRGQ. Residue P1156 is modified to 3-hydroxyproline; partial. Composition is skewed to pro residues over residues 1171–1181 and 1211–1226; these read PFGPRGPPGPV and EGPP…PGPP. Residues 1230 to 1499 constitute a propeptide, C-terminal propeptide; it reads TAALGDIMGH…GVEIGPVCFV (270 aa). N1262 carries N-linked (GlcNAc...) asparagine glycosylation. One can recognise a Fibrillar collagen NC1 domain in the interval 1266–1499; the sequence is PGVHATLKSL…GVEIGPVCFV (234 aa). 3 cysteine pairs are disulfide-bonded: C1296/C1328, C1336/C1497, and C1405/C1450. Ca(2+) contacts are provided by D1314, N1316, Q1317, and D1322. N-linked (GlcNAc...) asparagine glycosylation is present at N1400.

This sequence belongs to the fibrillar collagen family. In terms of assembly, trimers of two alpha 1(V) and one alpha 2(V) chains in most tissues and trimers of one alpha 1(V), one alpha 2(V), and one alpha 3(V) chains in placenta. In terms of processing, prolines at the third position of the tripeptide repeating unit (G-X-P) are hydroxylated in some or all of the chains. Probably 3-hydroxylated on Pro-919 and Pro-1156 by LEPREL1.

It localises to the secreted. The protein resides in the extracellular space. The protein localises to the extracellular matrix. Its function is as follows. Type V collagen is a member of group I collagen (fibrillar forming collagen). It is a minor connective tissue component of nearly ubiquitous distribution. Type V collagen binds to DNA, heparan sulfate, thrombospondin, heparin, and insulin. Type V collagen is a key determinant in the assembly of tissue-specific matrices. The polypeptide is Collagen alpha-2(V) chain (COL5A2) (Homo sapiens (Human)).